The primary structure comprises 257 residues: 5'-nucleotidase SurE (257 aa).

Asp9, Asp10, Ser40, and Asn92 together coordinate a divalent metal cation.

This sequence belongs to the SurE nucleotidase family. It depends on a divalent metal cation as a cofactor.

It is found in the cytoplasm. It carries out the reaction a ribonucleoside 5'-phosphate + H2O = a ribonucleoside + phosphate. Its function is as follows. Nucleotidase that shows phosphatase activity on nucleoside 5'-monophosphates. This chain is 5'-nucleotidase SurE, found in Alkalilimnicola ehrlichii (strain ATCC BAA-1101 / DSM 17681 / MLHE-1).